The sequence spans 28 residues: Venom protein (28 aa).

The segment at 1–28 is disordered; sequence KEGYPDGQNGKKIPCAINDNISKTXEQA. Over residues 19–28 the composition is skewed to polar residues; the sequence is DNISKTXEQA.

Expressed by the venom gland.

The protein localises to the secreted. In terms of biological role, causes symptoms of mild intoxication and transient paralysis in insects (A.domestica). In Rhopalurus junceus (Caribbean blue scorpion), this protein is Venom protein.